The following is a 107-amino-acid chain: Large ribosomal subunit protein uL18c (107 aa).

This sequence belongs to the universal ribosomal protein uL18 family. As to quaternary structure, part of the 50S ribosomal subunit; contacts the 5S rRNA.

The protein resides in the plastid. It is found in the chloroplast. Its function is as follows. Binds 5S rRNA, forms part of the central protuberance of the 50S subunit. This chain is Large ribosomal subunit protein uL18c (rpl18), found in Guillardia theta (Cryptophyte).